The sequence spans 232 residues: tRNA (guanine-N(1)-)-methyltransferase (232 aa).

Residues G111 and 131–136 (IGDYIL) each bind S-adenosyl-L-methionine.

This sequence belongs to the RNA methyltransferase TrmD family. Homodimer.

Its subcellular location is the cytoplasm. It carries out the reaction guanosine(37) in tRNA + S-adenosyl-L-methionine = N(1)-methylguanosine(37) in tRNA + S-adenosyl-L-homocysteine + H(+). Specifically methylates guanosine-37 in various tRNAs. The chain is tRNA (guanine-N(1)-)-methyltransferase from Bartonella tribocorum (strain CIP 105476 / IBS 506).